Reading from the N-terminus, the 200-residue chain is Lipopolysaccharide core heptose(II)-phosphate phosphatase (200 aa).

The signal sequence occupies residues M1–A25.

Belongs to the phosphoglycerate mutase family. Ais subfamily.

The protein resides in the periplasm. Its pathway is bacterial outer membrane biogenesis; lipopolysaccharide metabolism. Catalyzes the dephosphorylation of heptose(II) of the outer membrane lipopolysaccharide core. In Escherichia coli O6:K15:H31 (strain 536 / UPEC), this protein is Lipopolysaccharide core heptose(II)-phosphate phosphatase.